We begin with the raw amino-acid sequence, 282 residues long: Chorismate dehydratase (282 aa).

The protein belongs to the MqnA/MqnD family. MqnA subfamily.

The enzyme catalyses chorismate = 3-[(1-carboxyvinyl)-oxy]benzoate + H2O. It participates in quinol/quinone metabolism; menaquinone biosynthesis. Functionally, catalyzes the dehydration of chorismate into 3-[(1-carboxyvinyl)oxy]benzoate, a step in the biosynthesis of menaquinone (MK, vitamin K2). In Streptomyces coelicolor (strain ATCC BAA-471 / A3(2) / M145), this protein is Chorismate dehydratase.